The chain runs to 273 residues: METNLQKRKDSRKALRIKVISMGNAEVGKSCIIKRYCEKRFVPKYQATIGIDYGVTKVHIKDREIKVNIFDMAGHPFFYEVRNEFYKDTQGVILVYDVGHKETFESLDGWLAEMKQELGPQGNIDNIVFAVCANKIDSTKHRSVDESEGRLWSESKGFLYFETSAQSGEGINEMFQAFYSAIVDLCDNGGKRPVSAINIGFTKEQADSIRRIRNCKDSWDMLGVKPGATRDEVNKAYRKLAVLLHPDKCMAPGSEDAFKAVVNARTALLKNIK.

GTP-binding positions include 23 to 30, 71 to 75, and 134 to 137; these read GNAEVGKS, DMAGH, and NKID. A J domain is found at 217 to 273; the sequence is DSWDMLGVKPGATRDEVNKAYRKLAVLLHPDKCMAPGSEDAFKAVVNARTALLKNIK.

This sequence belongs to the small GTPase superfamily. Rab family.

The protein localises to the nucleus. Its function is as follows. GTPase possibly involved in regulation of the MEK/ERK pathway. The protein is DnaJ homolog subfamily C member 27-A (dnajc27-a) of Xenopus laevis (African clawed frog).